Reading from the N-terminus, the 273-residue chain is 2,3,4,5-tetrahydropyridine-2,6-dicarboxylate N-succinyltransferase (273 aa).

Substrate contacts are provided by arginine 104 and aspartate 141.

The protein belongs to the transferase hexapeptide repeat family. In terms of assembly, homotrimer.

Its subcellular location is the cytoplasm. It carries out the reaction (S)-2,3,4,5-tetrahydrodipicolinate + succinyl-CoA + H2O = (S)-2-succinylamino-6-oxoheptanedioate + CoA. It functions in the pathway amino-acid biosynthesis; L-lysine biosynthesis via DAP pathway; LL-2,6-diaminopimelate from (S)-tetrahydrodipicolinate (succinylase route): step 1/3. This chain is 2,3,4,5-tetrahydropyridine-2,6-dicarboxylate N-succinyltransferase, found in Neisseria gonorrhoeae (strain ATCC 700825 / FA 1090).